A 123-amino-acid chain; its full sequence is Holo-[acyl-carrier-protein] synthase (123 aa).

2 residues coordinate Mg(2+): D9 and E57.

The protein belongs to the P-Pant transferase superfamily. AcpS family. The cofactor is Mg(2+).

The protein resides in the cytoplasm. It catalyses the reaction apo-[ACP] + CoA = holo-[ACP] + adenosine 3',5'-bisphosphate + H(+). In terms of biological role, transfers the 4'-phosphopantetheine moiety from coenzyme A to a Ser of acyl-carrier-protein. The sequence is that of Holo-[acyl-carrier-protein] synthase from Streptomyces coelicolor (strain ATCC BAA-471 / A3(2) / M145).